Consider the following 1358-residue polypeptide: Phosphoinositide 3-kinase regulatory subunit 4 (1358 aa).

Residue glycine 2 is the site of N-myristoyl glycine attachment. Residues 26–324 (FEYDKSLGST…AFPEVFYTFL (299 aa)) enclose the Protein kinase domain. Residues 32–40 (LGSTRFFKV) and lysine 53 contribute to the ATP site. The active-site Proton acceptor is aspartate 148. HEAT repeat units lie at residues 413 to 450 (ILLDRITPYLLHFSNNSVPRVRAEALRTLTKVLALVQE), 458 to 495 (IYPEYILPGIAHLAQDDATIVRLAYAENIALLAETALR), 572 to 610 (KANDVLLSHMITFLNDKNDWHLRGAFFDSIVGVAAYVGW), and 612 to 648 (SSSILKPLLQQGLSDAEEFVIVKALNALTCMCQLGLL). A phosphoserine mark is found at serine 808, serine 813, serine 853, and serine 865. Residues 875 to 899 (LPKTSDHEVVPTGKSPRSESSAGVC) are disordered. WD repeat units lie at residues 991–1030 (EHKSAVNRIRVSDEHLLFATCSNDGTVKIWNSQKMEGKTT), 1040–1079 (RIGGRVKTLTFCQGSHYLAIASDNGAVQLLGIEASKLPKS), 1093–1134 (KEDG…NAWT), 1139–1178 (LKSGLITSFAVDIHQCWLCIGTSSGAMACWDMRFQLPISS), 1182–1223 (PSRA…RRLT), and 1237–1278 (PSPH…RSYV). The tract at residues 1307 to 1326 (KQKVGPSDDTPRRGPESLPV) is disordered. Positions 1315-1326 (DTPRRGPESLPV) are enriched in basic and acidic residues. Threonine 1316 bears the Phosphothreonine mark. Residues 1327-1358 (GHHDIITDIATFQTTQGFIVTASRDGIVKVWK) form a WD 7 repeat.

Belongs to the protein kinase superfamily. Ser/Thr protein kinase family. Component of the PI3K (PI3KC3/PI3K-III/class III phosphatidylinositol 3-kinase) complex the core of which is composed of the catalytic subunit PIK3C3, the regulatory subunit PIK3R4 and BECN1 associating with additional regulatory/auxiliary subunits to form alternative complex forms. Alternative complex forms containing a fourth regulatory subunit in a mutually exclusive manner are PI3K complex I (PI3KC3-C1) containing ATG14, and PI3K complex II (PI3KC3-C2) containing UVRAG. PI3KC3-C1 displays a V-shaped architecture with PIK3R4 serving as a bridge between PIK3C3 and the ATG14:BECN1 subcomplex. Both, PI3KC3-C1 and PI3KC3-C2, can associate with further regulatory subunits, such as RUBCN, SH3GLB1/Bif-1, AMBRA1 and NRBF2. PI3KC3-C1 probably associates with PIK3CB. Interacts with RAB7A in the presence of PIK3C3/VPS34. Interacts with NRBF2. Interacts with ARMC3. The cofactor is Mn(2+). In terms of processing, myristoylated. Post-translationally, probably autophosphorylated.

The protein localises to the late endosome. Its subcellular location is the cytoplasmic vesicle. The protein resides in the autophagosome. It localises to the membrane. The catalysed reaction is L-seryl-[protein] + ATP = O-phospho-L-seryl-[protein] + ADP + H(+). The enzyme catalyses L-threonyl-[protein] + ATP = O-phospho-L-threonyl-[protein] + ADP + H(+). In terms of biological role, regulatory subunit of the PI3K complex that mediates formation of phosphatidylinositol 3-phosphate; different complex forms are believed to play a role in multiple membrane trafficking pathways: PI3KC3-C1 is involved in initiation of autophagosomes and PI3KC3-C2 in maturation of autophagosomes and endocytosis. Involved in regulation of degradative endocytic trafficking and cytokinesis, probably in the context of PI3KC3-C2. The sequence is that of Phosphoinositide 3-kinase regulatory subunit 4 (Pik3r4) from Rattus norvegicus (Rat).